The primary structure comprises 425 residues: MFTFSPSFMFDFELTRILGSASSGGCDVGEFKSALNTIKKNDPESWYAAWKQQAERAQKIADEAAKAGYRVLARNAYLRASNYFRATSYMFNNDDARVIPFTDKSIACFKRATELMDGEVLSVDIPYEDGITLPGYLFLPPQYARVPGKIPVVMYAAGADSTKEELYFLYGGTGPQLGYAILCLEGPGQGLLLKKNKIPLRPDFEVVAAKVLDFLDDLSRSQPALELDLGRIAMAGAATGGYFALRAATDPRIKACVSIDPFFSLWELSLTRVPQAFFKLWDSGWVPDGTFDAFTDRHARGNFQAGWEINLGKSSMGVEKATGMFRRFKQFTLEPEDGTKILDKVTCPVFITGPGSGQEMYASADDSTFKIQRLLTKVPDSKKEIWVPNDVADGGLTAKIGAWALLAQKTFEFLDKHFEVKRKEL.

Asp366 is a catalytic residue.

The protein belongs to the AB hydrolase superfamily. FUS2 hydrolase family. As to quaternary structure, homodimer.

It participates in mycotoxin biosynthesis. Functionally, alpha/beta hydrolase; part of the gene cluster that mediates the biosynthesis of xenoacremones such as xenoacremone A, a compound that shows inhibitory activity toward the PI3K/AKT signaling pathway and which has the ability to induce apoptosis of A549 lung cancer cells. Within the pathway, cooperation of the hybrid PKS-NRPS xenE and the trans-acting enoyl reductase xenG is responsible for the formation of the reduced tyrosine-nonaketide derivative. The alpha/beta hydrolase xenA then accelerates intramolecular nucleophilic attack to give a pyrrolidone derivative. Subsequently, three enzymes, xenF, xenD, and xenC, coordinately participate in the conversion to xenoacremone B. XenF catalyzes sigmatropic rearrangement to form an A-ring, which leads to an unusual intermediate with a hexane ring, which is required for the formation of the tricarbocyclic product. Epoxidation catalyzed by xenD and the formation of the paracyclophane ether catalyzed by xenC initiate a spontaneous intramolecular Diels-Alder (IMDA) reaction to yield xenoacremone B. Spontaneous hydration of xenoacremone B leads to the formation of xenoacremone A, which undergoes subsequent methylation to afford xenoacremone C. The sequence is that of Alpha/beta hydrolase xenA from Xenoacremonium sinensis (Endophyte fungus).